The sequence spans 337 residues: Glyceraldehyde-3-phosphate dehydrogenase (337 aa).

NAD(+) is bound by residues 12–13 (RI), Asp-34, Arg-78, and Thr-121. Residues 151–153 (SCT), Thr-182, Arg-199, 212–213 (SG), and Arg-235 each bind D-glyceraldehyde 3-phosphate. Cys-152 (nucleophile) is an active-site residue. Asn-317 contacts NAD(+).

The protein belongs to the glyceraldehyde-3-phosphate dehydrogenase family. As to quaternary structure, homotetramer.

The protein resides in the cytoplasm. The enzyme catalyses D-glyceraldehyde 3-phosphate + phosphate + NAD(+) = (2R)-3-phospho-glyceroyl phosphate + NADH + H(+). It participates in carbohydrate degradation; glycolysis; pyruvate from D-glyceraldehyde 3-phosphate: step 1/5. Its function is as follows. Catalyzes the oxidative phosphorylation of glyceraldehyde 3-phosphate (G3P) to 1,3-bisphosphoglycerate (BPG) using the cofactor NAD. The first reaction step involves the formation of a hemiacetal intermediate between G3P and a cysteine residue, and this hemiacetal intermediate is then oxidized to a thioester, with concomitant reduction of NAD to NADH. The reduced NADH is then exchanged with the second NAD, and the thioester is attacked by a nucleophilic inorganic phosphate to produce BPG. In Lactococcus lactis subsp. lactis (strain IL1403) (Streptococcus lactis), this protein is Glyceraldehyde-3-phosphate dehydrogenase (gap).